We begin with the raw amino-acid sequence, 236 residues long: DNA repair protein RecO (236 aa).

Belongs to the RecO family.

Its function is as follows. Involved in DNA repair and RecF pathway recombination. The protein is DNA repair protein RecO of Cellvibrio japonicus (strain Ueda107) (Pseudomonas fluorescens subsp. cellulosa).